The following is a 1218-amino-acid chain: DNA-directed RNA polymerase subunit beta' (1218 aa).

Zn(2+) is bound by residues Cys-60, Cys-62, Cys-75, and Cys-78. Mg(2+) contacts are provided by Asp-455, Asp-457, and Asp-459. Positions 824, 897, 904, and 907 each coordinate Zn(2+). The interval 1195-1218 (ENEAQSDKSQDEQEIGEITVDMGE) is disordered.

This sequence belongs to the RNA polymerase beta' chain family. In terms of assembly, the RNAP catalytic core consists of 2 alpha, 1 beta, 1 beta' and 1 omega subunit. When a sigma factor is associated with the core the holoenzyme is formed, which can initiate transcription. The cofactor is Mg(2+). Zn(2+) serves as cofactor.

The catalysed reaction is RNA(n) + a ribonucleoside 5'-triphosphate = RNA(n+1) + diphosphate. DNA-dependent RNA polymerase catalyzes the transcription of DNA into RNA using the four ribonucleoside triphosphates as substrates. The sequence is that of DNA-directed RNA polymerase subunit beta' from Natranaerobius thermophilus (strain ATCC BAA-1301 / DSM 18059 / JW/NM-WN-LF).